Here is a 139-residue protein sequence, read N- to C-terminus: Two-component response regulator 24 (139 aa).

In terms of domain architecture, Response regulatory spans 19–134; that stretch reads TALVVDDSFV…KLLSILHKLN (116 aa). 4-aspartylphosphate is present on Asp69.

This sequence belongs to the ARR family. Type-A subfamily. In terms of processing, two-component system major event consists of a His-to-Asp phosphorelay between a sensor histidine kinase (HK) and a response regulator (RR). In plants, the His-to-Asp phosphorelay involves an additional intermediate named Histidine-containing phosphotransfer protein (HPt). This multistep phosphorelay consists of a His-Asp-His-Asp sequential transfer of a phosphate group between first a His and an Asp of the HK protein, followed by the transfer to a conserved His of the HPt protein and finally the transfer to an Asp in the receiver domain of the RR protein. As to expression, mostly expressed in flowers and siliques, primarily restricted to pollen grains.

The protein localises to the nucleus. Functionally, functions as a response regulator involved in His-to-Asp phosphorelay signal transduction system. Phosphorylation of the Asp residue in the receiver domain activates the ability of the protein to promote the transcription of target genes. Type-A response regulators seem to act as negative regulators of the cytokinin signaling. The protein is Two-component response regulator 24 of Arabidopsis thaliana (Mouse-ear cress).